Consider the following 1820-residue polypeptide: Histone-lysine N-methyltransferase, H3 lysine-9 specific (1820 aa).

Disordered regions lie at residues 1–54, 74–251, 284–618, 634–681, 804–836, 850–893, 911–944, 966–996, 1063–1126, 1183–1270, 1296–1335, and 1385–1407; these read MPGA…TSMR, NLLP…TPVT, SLSD…APTK, SSER…KKAV, NVDD…SLSK, SSTL…VNSW, HAKK…EQLR, DVES…STDA, PLSV…NGAV, RYAV…DRTA, KASA…TSQQ, and RSEP…TDSD. Residues 11–31 show a composition bias toward low complexity; sequence VDNPLVLDSSDSDDNLSGLPL. Over residues 109 to 129 the composition is skewed to polar residues; sequence ADSSSPPENQNVISFLGNHSQ. The segment covering 152–169 has biased composition (low complexity); it reads GGENIAGQNNEANAAQAA. Polar residues-rich tracts occupy residues 174 to 204 and 212 to 222; these read GTPS…SAIN and SIPQQSPSSRA. Composition is skewed to low complexity over residues 226–236, 284–311, and 339–352; these read RSASIASSRSR, SLSD…TSTT, and TPAT…GPSA. Residues 361–370 show a composition bias toward basic and acidic residues; it reads KSSDQKESPR. Polar residues predominate over residues 374–385; the sequence is SKQPSSPSSTHG. Positions 400–424 are enriched in low complexity; sequence SATSGKSSAASSRSKSRAPLSSRAA. Residues 433 to 442 show a composition bias toward polar residues; the sequence is SKTTSVSSTH. Positions 443–459 are enriched in low complexity; sequence PPSRASPSSLPSQSQRQ. Polar residues predominate over residues 479–510; the sequence is TLSSGTGQSTPSKFSLPTSDVASNQKNKSTGL. 3 stretches are compositionally biased toward low complexity: residues 514-531, 551-563, and 594-618; these read PKKP…RTST, QSSS…IQTS, and TKAT…APTK. Polar residues-rich tracts occupy residues 643–662 and 810–827; these read GKSQ…TAAS and SAQP…SVSS. Over residues 850–861 the composition is skewed to low complexity; sequence SSTLGDSVSGLG. Residues 869–893 show a composition bias toward polar residues; it reads TQSMPQSPLPTTNTNNSSGIEVNSW. Basic and acidic residues-rich tracts occupy residues 917-944 and 966-983; these read KERE…EQLR and DVES…ETRK. Residues 1076 to 1089 are compositionally biased toward low complexity; it reads SSSSTSTPSLLSRS. Over residues 1296-1320 the composition is skewed to low complexity; the sequence is KASAVSPVPSANRPSPAPSAKADLL. The region spanning 1516–1585 is the Pre-SET domain; sequence LGCDCDGPCD…ECMNRVIQRG (70 aa). Residues Cys-1518, Cys-1520, Cys-1524, Cys-1531, Cys-1533, Cys-1567, Cys-1571, Cys-1573, and Cys-1577 each contribute to the Zn(2+) site. In terms of domain architecture, SET spans 1590–1750; the sequence is TGIEIFKTKE…KHEELCISYK (161 aa). Residues 1600–1602, Tyr-1643, Arg-1704, and 1707–1708 each bind S-adenosyl-L-methionine; these read KGW and NH. Zn(2+) is bound at residue Cys-1710. Residues 1756–1794 are disordered; the sequence is DDIPSPEPVKKKKGGKGKKQMSKTSASAHPPEMTALNSD. Basic residues predominate over residues 1765-1776; the sequence is KKKKGGKGKKQM. A Post-SET domain is found at 1800-1816; sequence VKDICRCGAKNCDGRMF. Zn(2+) is bound by residues Cys-1804, Cys-1806, and Cys-1811.

It belongs to the class V-like SAM-binding methyltransferase superfamily. Histone-lysine methyltransferase family. Suvar3-9 subfamily.

The protein localises to the nucleus. The protein resides in the chromosome. It carries out the reaction N(6)-methyl-L-lysyl(9)-[histone H3] + S-adenosyl-L-methionine = N(6),N(6)-dimethyl-L-lysyl(9)-[histone H3] + S-adenosyl-L-homocysteine + H(+). It catalyses the reaction L-lysyl(9)-[histone H3] + S-adenosyl-L-methionine = N(6)-methyl-L-lysyl(9)-[histone H3] + S-adenosyl-L-homocysteine + H(+). Its function is as follows. Histone methyltransferase that specifically dimethylates histone H3 to form H3K9me2. H3K9me2 represents a specific tag for epigenetic transcriptional repression by recruiting HP1 proteins to methylated histones. Mainly functions in heterochromatin regions, thereby playing a central role in the establishment of constitutive heterochromatin at centromeric regions. This chain is Histone-lysine N-methyltransferase, H3 lysine-9 specific, found in Cryptococcus neoformans var. grubii serotype A (strain H99 / ATCC 208821 / CBS 10515 / FGSC 9487) (Filobasidiella neoformans var. grubii).